Consider the following 576-residue polypeptide: Nuclear/nucleolar GTPase 2 (576 aa).

Disordered stretches follow at residues 1–61 and 166–186; these read MVKK…SNEY and QDAF…EEED. A compositionally biased stretch (basic and acidic residues) spans 16 to 34; that stretch reads HSLDANRADGKKKTTETRS. Positions 42-52 are enriched in basic residues; that stretch reads KMYKTRPKRNA. The region spanning 206-367 is the CP-type G domain; sequence WGELYKVIDS…LIDCPGVVYQ (162 aa). The DARXP motif motif lies at 224 to 228; sequence DARDP. The interval 254–257 is G4; it reads NKCD. 254–257 contacts GTP; it reads NKCD. The segment at 283-285 is G5; that stretch reads SVN. The G1 stretch occupies residues 316–323; it reads GYPNVGKS. Residue 319-324 participates in GTP binding; the sequence is NVGKSS. The tract at residues 342–346 is G2; sequence GETKV. A G3 region spans residues 360–363; that stretch reads DCPG. Gly-363 is a binding site for GTP. A disordered region spans residues 502 to 576; the sequence is TQQQKDVPVQ…DEEDESDSAE (75 aa). A compositionally biased stretch (basic and acidic residues) spans 509-530; the sequence is PVQRDFYDEKDLKDDKKAKEST. Acidic residues predominate over residues 531–576; that stretch reads ETDAENGTDAEEDEDAVSEDGVESDSDADEDAVSENDEEDESDSAE.

The protein belongs to the TRAFAC class YlqF/YawG GTPase family. RsgA subfamily. Interacts with the 60S ribosomal proteins RPL10AA, RPL10AB and RPL10AC. Ubiquitous, with higher levels in meristematic regions.

It is found in the nucleus. It localises to the nucleolus. The GTPase activity is stimulated in the presence of the 60S ribosomal subunit. Its function is as follows. GTPase involved in pre-60S ribosomal subunit maturation. This chain is Nuclear/nucleolar GTPase 2, found in Arabidopsis thaliana (Mouse-ear cress).